The primary structure comprises 331 residues: Cytosolic arginine sensor for mTORC1 subunit 1 (331 aa).

Ser14 carries the post-translational modification Phosphoserine. In terms of domain architecture, ACT 1 spans 72 to 139; the sequence is AEATWLVMNV…SVVIHTLARE (68 aa). An L-arginine-binding site is contributed by 110 to 111; sequence SV. A disordered region spans residues 155 to 174; that stretch reads GDDSSNGFPQAQHGPSPTVH. Residues 156–174 show a composition bias toward polar residues; sequence DDSSNGFPQAQHGPSPTVH. In terms of domain architecture, ACT 2 spans 262 to 322; sequence WRMVRIGGQP…SCVIDILQRR (61 aa). Residues Gly273, 279-280, and 299-303 contribute to the L-arginine site; these read IV and TFNFD.

It belongs to the GATS family. Forms homodimers and heterodimers with CASTOR2. Interacts with the GATOR2 complex which is composed of MIOS, SEC13, SEH1L, WDR24 and WDR59; the interaction is negatively regulated by arginine. Interacts with TM4SF5; the interaction is positively regulated by leucine and is negatively regulated by arginine. In terms of processing, phosphorylation at Ser-14 by AKT1, promoting the interaction between CASTOR1 and RNF167. Post-translationally, ubiquitinated by RNF167 via 'Lys-29'-polyubiquitination, leading to its degradation, releasing the GATOR2 complex. Ubiquitination by RNF167 is promoted by phosphorylation at Ser-14 by AKT1.

It is found in the cytoplasm. The protein localises to the cytosol. Its function is as follows. Functions as an intracellular arginine sensor within the amino acid-sensing branch of the TORC1 signaling pathway. As a homodimer or a heterodimer with CASTOR2, binds and inhibits the GATOR subcomplex GATOR2 and thereby mTORC1. Binding of arginine to CASTOR1 allosterically disrupts the interaction of CASTOR1-containing dimers with GATOR2 which can in turn activate mTORC1 and the TORC1 signaling pathway. This is Cytosolic arginine sensor for mTORC1 subunit 1 from Rattus norvegicus (Rat).